Consider the following 93-residue polypeptide: Small ribosomal subunit protein uS19c (93 aa).

Belongs to the universal ribosomal protein uS19 family.

The protein localises to the plastid. The protein resides in the chloroplast. In terms of biological role, protein S19 forms a complex with S13 that binds strongly to the 16S ribosomal RNA. The chain is Small ribosomal subunit protein uS19c from Ipomoea purpurea (Common morning glory).